The following is a 380-amino-acid chain: Succinyl-diaminopimelate desuccinylase (380 aa).

His-69 serves as a coordination point for Zn(2+). Asp-71 is a catalytic residue. Asp-102 serves as a coordination point for Zn(2+). The active-site Proton acceptor is the Glu-135. Positions 136, 164, and 353 each coordinate Zn(2+).

It belongs to the peptidase M20A family. DapE subfamily. As to quaternary structure, homodimer. The cofactor is Zn(2+). It depends on Co(2+) as a cofactor.

It carries out the reaction N-succinyl-(2S,6S)-2,6-diaminopimelate + H2O = (2S,6S)-2,6-diaminopimelate + succinate. Its pathway is amino-acid biosynthesis; L-lysine biosynthesis via DAP pathway; LL-2,6-diaminopimelate from (S)-tetrahydrodipicolinate (succinylase route): step 3/3. Functionally, catalyzes the hydrolysis of N-succinyl-L,L-diaminopimelic acid (SDAP), forming succinate and LL-2,6-diaminopimelate (DAP), an intermediate involved in the bacterial biosynthesis of lysine and meso-diaminopimelic acid, an essential component of bacterial cell walls. The sequence is that of Succinyl-diaminopimelate desuccinylase from Cereibacter sphaeroides (strain ATCC 17025 / ATH 2.4.3) (Rhodobacter sphaeroides).